A 139-amino-acid polypeptide reads, in one-letter code: Histone H2B.11 (139 aa).

Positions 1 to 39 (MAPKAEKKPAEKKPVEEKAEKKPKAEKRVPGAKEGGGEK) are enriched in basic and acidic residues. Residues 1–47 (MAPKAEKKPAEKKPVEEKAEKKPKAEKRVPGAKEGGGEKKGKKKAKK) are disordered. Residues K7 and K27 each carry the N6-acetyllysine modification. A Glycyl lysine isopeptide (Lys-Gly) (interchain with G-Cter in ubiquitin) cross-link involves residue K135.

The protein belongs to the histone H2B family. In terms of assembly, the nucleosome is a histone octamer containing two molecules each of H2A, H2B, H3 and H4 assembled in one H3-H4 heterotetramer and two H2A-H2B heterodimers. The octamer wraps approximately 147 bp of DNA. Can be acetylated to form H2BK6ac and H2BK33ac. In terms of processing, monoubiquitinated by BRE1 to form H2BK143ub1 and deubiquitinated by UBP26. Required for heterochromatic histone H3 di- and trimethylation at H3K4me. May give a specific tag for epigenetic transcriptional activation.

It is found in the nucleus. The protein localises to the chromosome. Functionally, core component of nucleosome. Nucleosomes wrap and compact DNA into chromatin, limiting DNA accessibility to the cellular machineries which require DNA as a template. Histones thereby play a central role in transcription regulation, DNA repair, DNA replication and chromosomal stability. DNA accessibility is regulated via a complex set of post-translational modifications of histones, also called histone code, and nucleosome remodeling. The protein is Histone H2B.11 (H2B.11) of Oryza sativa subsp. indica (Rice).